Here is a 117-residue protein sequence, read N- to C-terminus: Immunoglobulin kappa variable 1D-16 (117 aa).

An N-terminal signal peptide occupies residues 1–22 (MDMRVLAQLLGLLLLCFPGARC). The segment at 23-45 (DIQMTQSPSSLSASVGDRVTITC) is framework-1. The region spanning 24-117 (IQMTQSPSSL…YYCQQYNSYP (94 aa)) is the Ig-like domain. Residues cysteine 45 and cysteine 110 are joined by a disulfide bond. The segment at 46–56 (RASQGISSWLA) is complementarity-determining-1. The framework-2 stretch occupies residues 57-71 (WYQQKPEKAPKSLIY). The interval 72–78 (AASSLQS) is complementarity-determining-2. The tract at residues 79–110 (GVPSRFSGSGSGTDFTLTISSLQPEDFATYYC) is framework-3. The segment at 111-117 (QQYNSYP) is complementarity-determining-3.

As to quaternary structure, immunoglobulins are composed of two identical heavy chains and two identical light chains; disulfide-linked.

Its subcellular location is the secreted. The protein resides in the cell membrane. In terms of biological role, v region of the variable domain of immunoglobulin light chains that participates in the antigen recognition. Immunoglobulins, also known as antibodies, are membrane-bound or secreted glycoproteins produced by B lymphocytes. In the recognition phase of humoral immunity, the membrane-bound immunoglobulins serve as receptors which, upon binding of a specific antigen, trigger the clonal expansion and differentiation of B lymphocytes into immunoglobulins-secreting plasma cells. Secreted immunoglobulins mediate the effector phase of humoral immunity, which results in the elimination of bound antigens. The antigen binding site is formed by the variable domain of one heavy chain, together with that of its associated light chain. Thus, each immunoglobulin has two antigen binding sites with remarkable affinity for a particular antigen. The variable domains are assembled by a process called V-(D)-J rearrangement and can then be subjected to somatic hypermutations which, after exposure to antigen and selection, allow affinity maturation for a particular antigen. This Homo sapiens (Human) protein is Immunoglobulin kappa variable 1D-16.